The chain runs to 490 residues: MDPVLVLVLTLSCLLLLSLWRQSSGRGKLPPGPTPLPIIGNILQIDVKDISKSFSYFSKIYGPVFTLYFGPKPTVVVHGYEAVKEALDDLGEEFSGRGSFPIVERMNNGLGLIFSNGTKWKELRHFSLMTLRNFGMGKRSIEDRIQEEASCLVEELRKTNGSLCDPTFILSCAPSNVICSVVFHNRFDYKDENFLNLMEKLNENFKILNSPWMQVCNALPAFIDYLPGSHNRVIKNFAEIKSYILRRVKEHQETLDMDNPRDFIDCFLIKMEQEKHNPRTEFTIESLMATVSDVFVAGSETTSTTLRYGLLLLLKHTEVTAKVQEEIDHVIGRHRRPCMQDRTRMPYTDAMVHEIQRYINLIPNNVPHAATCNVRFRNYVIPKGTDLVTSLTSVLHDDKEFPNPEVFDPGHFLDENGNFKKSDYFMPFSTGKRMCVGEALARMELFLLLTTIVQNFNLKSFVDTKDIDTTPMANTFGRVPPSYQLCFIPR.

Cysteine 435 lines the heme pocket.

It belongs to the cytochrome P450 family. It depends on heme as a cofactor.

It localises to the endoplasmic reticulum membrane. Its subcellular location is the microsome membrane. It catalyses the reaction an organic molecule + reduced [NADPH--hemoprotein reductase] + O2 = an alcohol + oxidized [NADPH--hemoprotein reductase] + H2O + H(+). Metabolizes arachidonic acid mainly to 19-hydroxyeicosatetraenoic acid (HETE). This Rattus norvegicus (Rat) protein is Cytochrome P450 2C55 (Cyp2c55).